The chain runs to 321 residues: Ribosomal RNA small subunit methyltransferase H (321 aa).

S-adenosyl-L-methionine is bound by residues 33 to 35 (AGH), D58, F85, D111, and Q118.

This sequence belongs to the methyltransferase superfamily. RsmH family.

It localises to the cytoplasm. The catalysed reaction is cytidine(1402) in 16S rRNA + S-adenosyl-L-methionine = N(4)-methylcytidine(1402) in 16S rRNA + S-adenosyl-L-homocysteine + H(+). Its function is as follows. Specifically methylates the N4 position of cytidine in position 1402 (C1402) of 16S rRNA. The sequence is that of Ribosomal RNA small subunit methyltransferase H from Chloroherpeton thalassium (strain ATCC 35110 / GB-78).